Reading from the N-terminus, the 415-residue chain is Gamma-glutamyl phosphate reductase (415 aa).

Belongs to the gamma-glutamyl phosphate reductase family.

The protein localises to the cytoplasm. The catalysed reaction is L-glutamate 5-semialdehyde + phosphate + NADP(+) = L-glutamyl 5-phosphate + NADPH + H(+). It participates in amino-acid biosynthesis; L-proline biosynthesis; L-glutamate 5-semialdehyde from L-glutamate: step 2/2. Catalyzes the NADPH-dependent reduction of L-glutamate 5-phosphate into L-glutamate 5-semialdehyde and phosphate. The product spontaneously undergoes cyclization to form 1-pyrroline-5-carboxylate. This chain is Gamma-glutamyl phosphate reductase, found in Salmonella dublin (strain CT_02021853).